Reading from the N-terminus, the 246-residue chain is UDP-N-acetyl-D-mannosaminuronic acid transferase (246 aa).

It belongs to the glycosyltransferase 26 family.

It carries out the reaction UDP-N-acetyl-alpha-D-mannosaminouronate + N-acetyl-alpha-D-glucosaminyl-di-trans,octa-cis-undecaprenyl diphosphate = beta-D-ManNAcA-(1-&gt;4)-alpha-D-GlcNAc-di-trans,octa-cis-undecaprenyl diphosphate + UDP + H(+). It participates in bacterial outer membrane biogenesis; enterobacterial common antigen biosynthesis. In terms of biological role, catalyzes the synthesis of Und-PP-GlcNAc-ManNAcA (Lipid II), the second lipid-linked intermediate involved in enterobacterial common antigen (ECA) synthesis. In Salmonella agona (strain SL483), this protein is UDP-N-acetyl-D-mannosaminuronic acid transferase.